The chain runs to 607 residues: Zinc finger CCCH domain-containing protein 66 (607 aa).

ANK repeat units lie at residues E57–R87 and D92–S124. Acidic residues predominate over residues L161–V178. The segment at L161–V193 is disordered. C3H1-type zinc fingers lie at residues P254–F276 and Q284–E308. Residues I342 to P363 are disordered. Over residues A349 to S361 the composition is skewed to polar residues.

The polypeptide is Zinc finger CCCH domain-containing protein 66 (Arabidopsis thaliana (Mouse-ear cress)).